A 205-amino-acid chain; its full sequence is Riboflavin kinase (205 aa).

The tract at residues 1–24 (MRPDTSRDPVAGPDSGPEPPFPIR) is disordered. Mg(2+) is bound by residues Thr-44 and Asn-46. Glu-104 functions as the Nucleophile in the catalytic mechanism.

It belongs to the flavokinase family. Requires Zn(2+) as cofactor. The cofactor is Mg(2+).

The enzyme catalyses riboflavin + ATP = FMN + ADP + H(+). Its pathway is cofactor biosynthesis; FMN biosynthesis; FMN from riboflavin (ATP route): step 1/1. In terms of biological role, catalyzes the phosphorylation of riboflavin (vitamin B2) to form flavin mononucleotide (FMN) coenzyme. The protein is Riboflavin kinase (fmn1) of Aspergillus terreus (strain NIH 2624 / FGSC A1156).